The sequence spans 155 residues: 6,7-dimethyl-8-ribityllumazine synthase (155 aa).

5-amino-6-(D-ribitylamino)uracil contacts are provided by residues Phe23, 57–59 (AFE), and 81–83 (AVI). Residue 86-87 (ST) participates in (2S)-2-hydroxy-3-oxobutyl phosphate binding. The active-site Proton donor is the His89. Phe114 is a binding site for 5-amino-6-(D-ribitylamino)uracil. Arg128 is a binding site for (2S)-2-hydroxy-3-oxobutyl phosphate.

Belongs to the DMRL synthase family.

The enzyme catalyses (2S)-2-hydroxy-3-oxobutyl phosphate + 5-amino-6-(D-ribitylamino)uracil = 6,7-dimethyl-8-(1-D-ribityl)lumazine + phosphate + 2 H2O + H(+). Its pathway is cofactor biosynthesis; riboflavin biosynthesis; riboflavin from 2-hydroxy-3-oxobutyl phosphate and 5-amino-6-(D-ribitylamino)uracil: step 1/2. Functionally, catalyzes the formation of 6,7-dimethyl-8-ribityllumazine by condensation of 5-amino-6-(D-ribitylamino)uracil with 3,4-dihydroxy-2-butanone 4-phosphate. This is the penultimate step in the biosynthesis of riboflavin. This is 6,7-dimethyl-8-ribityllumazine synthase from Citrifermentans bemidjiense (strain ATCC BAA-1014 / DSM 16622 / JCM 12645 / Bem) (Geobacter bemidjiensis).